The sequence spans 1346 residues: Proline-rich protein 36 (1346 aa).

Disordered regions lie at residues 1–403 (MDNK…TQLI), 426–512 (SVSS…QATP), 537–606 (PLTT…PSPL), 633–679 (PRQT…VSPL), 711–1155 (LETQ…AELA), and 1168–1240 (PPLA…RSPK). A compositionally biased stretch (low complexity) spans 10–26 (AGAAARTPAARAPGLLT). Pro residues predominate over residues 27–40 (PRPPGSPRPPPPVT). Low complexity-rich tracts occupy residues 41-55 (PAALRVLGAAGAVGR) and 86-97 (SSRNPASRPPAS). Over residues 137 to 152 (SAEETVARGKATEAPK) the composition is skewed to basic and acidic residues. A compositionally biased stretch (low complexity) spans 165–177 (SGPTPGTPSPAMA). Residues 191-203 (RPAPSARPRPPTE) show a composition bias toward pro residues. Residues 208–220 (SVSSASEHSTTEP) show a composition bias toward polar residues. Low complexity-rich tracts occupy residues 235–255 (QRPASRSLSSSATPLSSPARS) and 293–312 (APALGPLSSSPLATPSPSGT). Composition is skewed to pro residues over residues 329–343 (ATLPPSPPVTPPPPA), 371–380 (PLAPPSPSAP), and 387–397 (PSPPATPPSQV). Residues 426-464 (SVSSPLQSMPPTQANPALPSLPTLLSPLATPPLSAMSPL) are compositionally biased toward low complexity. Residues 494 to 506 (TPPPQASPSPSPP) are compositionally biased toward pro residues. The segment covering 546 to 558 (PPLVSPSLLASPP) has biased composition (low complexity). Over residues 559–578 (LQAPPHPQAPPSMTTPPMQA) the composition is skewed to pro residues. Residues 633-647 (PRQTQASLISPSRPA) are compositionally biased toward polar residues. The segment covering 648–657 (STPPDSPPLQ) has biased composition (pro residues). A compositionally biased stretch (low complexity) spans 658-679 (APLSLPASPPLQTSLSPAVSPL). Over residues 724–733 (TPPASLTTPP) the composition is skewed to polar residues. 2 stretches are compositionally biased toward pro residues: residues 781–821 (ETPP…PALA) and 829–865 (PSPPLSPLATPPPQAPPALALPPLQAPPSPPASPPLS). Positions 866 to 875 (PLATPSPQAP) are enriched in low complexity. Composition is skewed to pro residues over residues 887–917 (FSPPPSPPVQAPFSPPASPPVSPSATPPSQA), 926–997 (LQVP…PPAS), and 1004–1015 (AKPPPQAPPALA). Low complexity-rich tracts occupy residues 1029–1046 (FPGQAPFSPSASLPMSPL), 1137–1146 (DSGPEGGAAA), and 1224–1239 (GKAAAGAGAGASSRSP). At S1310 the chain carries Phosphoserine.

This Homo sapiens (Human) protein is Proline-rich protein 36.